A 165-amino-acid chain; its full sequence is Large ribosomal subunit protein uL10 (165 aa).

Belongs to the universal ribosomal protein uL10 family. As to quaternary structure, part of the ribosomal stalk of the 50S ribosomal subunit. The N-terminus interacts with L11 and the large rRNA to form the base of the stalk. The C-terminus forms an elongated spine to which L12 dimers bind in a sequential fashion forming a multimeric L10(L12)X complex.

Functionally, forms part of the ribosomal stalk, playing a central role in the interaction of the ribosome with GTP-bound translation factors. The protein is Large ribosomal subunit protein uL10 of Serratia proteamaculans (strain 568).